We begin with the raw amino-acid sequence, 89 residues long: MTEAKKSLKRTLIGKVVSDKRAKTVTVLVERRVKHELYGKIVSLSSKYHAHDEKGEYHTGDVIEITESRPISKTKNWVVTRLVEKAAAV.

Belongs to the universal ribosomal protein uS17 family. As to quaternary structure, part of the 30S ribosomal subunit.

Functionally, one of the primary rRNA binding proteins, it binds specifically to the 5'-end of 16S ribosomal RNA. This Polaromonas sp. (strain JS666 / ATCC BAA-500) protein is Small ribosomal subunit protein uS17.